Here is a 367-residue protein sequence, read N- to C-terminus: MKIDKTLVVKFGTSTLTQGSAKLNLPHMMDIVRQLAQLHQAGFRLVIVTSGAIAAGRHYLNHPQLPPTIASKQLLAAVGQSQLIQTWEKLFAIYDIHIGQILLTRADIEDRERFLNARDTLRALLDNQIIPVINENDAVATSEIKVGDNDNLSALVAILVQAEQLYLLTDQQGLFDRDPRKHPDAKLIADVDKITDHIRAIAGGSGTSLGTGGMSTKISAADVATRSGIETIIAPGNRPNVIVDLAYGQAIGTKFSVQADRLESRKQWLYAAPSAGIITIDAGAENAMLMQHKSLLPAGIVNVEGRFSRGEVVKIRTQQGKDVALGMPRYNSDALHLIQGKHSQDIEQVLGYEYGAVAVHRDDMIVL.

Lys10 is a binding site for ATP. Residues Ser50, Asp137, and Asn149 each coordinate substrate. Residues 169–170 (TD) and 211–217 (TGGMSTK) each bind ATP. The PUA domain occupies 275 to 353 (AGIITIDAGA…QDIEQVLGYE (79 aa)).

This sequence belongs to the glutamate 5-kinase family.

It is found in the cytoplasm. The enzyme catalyses L-glutamate + ATP = L-glutamyl 5-phosphate + ADP. It functions in the pathway amino-acid biosynthesis; L-proline biosynthesis; L-glutamate 5-semialdehyde from L-glutamate: step 1/2. In terms of biological role, catalyzes the transfer of a phosphate group to glutamate to form L-glutamate 5-phosphate. The protein is Glutamate 5-kinase of Pasteurella multocida (strain Pm70).